Reading from the N-terminus, the 157-residue chain is UPF0251 protein CLM_1546 (157 aa).

The protein belongs to the UPF0251 family.

This is UPF0251 protein CLM_1546 from Clostridium botulinum (strain Kyoto / Type A2).